The chain runs to 281 residues: Nucleotide-binding protein Patl_0571 (281 aa).

An ATP-binding site is contributed by 8–15 (GRSGSGKS). GTP is bound at residue 56 to 59 (DVRN).

It belongs to the RapZ-like family.

Functionally, displays ATPase and GTPase activities. This chain is Nucleotide-binding protein Patl_0571, found in Pseudoalteromonas atlantica (strain T6c / ATCC BAA-1087).